A 146-amino-acid chain; its full sequence is Large ribosomal subunit protein uL13 (146 aa).

This sequence belongs to the universal ribosomal protein uL13 family. In terms of assembly, part of the 50S ribosomal subunit.

Functionally, this protein is one of the early assembly proteins of the 50S ribosomal subunit, although it is not seen to bind rRNA by itself. It is important during the early stages of 50S assembly. The polypeptide is Large ribosomal subunit protein uL13 (Bdellovibrio bacteriovorus (strain ATCC 15356 / DSM 50701 / NCIMB 9529 / HD100)).